Here is a 568-residue protein sequence, read N- to C-terminus: 2-isopropylmalate synthase (568 aa).

Residues 37–313 (PRWLSTDLRD…DPMIDFSNID (277 aa)) form the Pyruvate carboxyltransferase domain. D46, H252, H254, and N288 together coordinate Mg(2+). The segment at 455–568 (EGVVGVMAYR…CSAVNRAQQS (114 aa)) is regulatory domain.

Belongs to the alpha-IPM synthase/homocitrate synthase family. LeuA type 2 subfamily. In terms of assembly, homodimer. Mg(2+) serves as cofactor.

It is found in the cytoplasm. It catalyses the reaction 3-methyl-2-oxobutanoate + acetyl-CoA + H2O = (2S)-2-isopropylmalate + CoA + H(+). It participates in amino-acid biosynthesis; L-leucine biosynthesis; L-leucine from 3-methyl-2-oxobutanoate: step 1/4. Its function is as follows. Catalyzes the condensation of the acetyl group of acetyl-CoA with 3-methyl-2-oxobutanoate (2-ketoisovalerate) to form 3-carboxy-3-hydroxy-4-methylpentanoate (2-isopropylmalate). The sequence is that of 2-isopropylmalate synthase from Thermobifida fusca (strain YX).